The primary structure comprises 458 residues: Acyl-CoA-binding domain-containing protein 5 (458 aa).

In terms of domain architecture, ACB spans 8 to 97 (HQTRFEAAVS…MKKILETMPV (90 aa)). An acyl-CoA-binding positions include 19 to 28 (IQSLPKNGSF), 39 to 43 (YSFYK), K65, and Y84. Disordered stretches follow at residues 119–248 (KHGR…REED) and 296–369 (TETS…GPNG). Residues 125–139 (GVTSELGSVLTSTPN) show a composition bias toward polar residues. A coiled-coil region spans residues 154 to 188 (AESDEEQAATKEVREEDEEEESEHSEQEDKDVEQQ). Basic and acidic residues-rich tracts occupy residues 177-195 (HSEQEDKDVEQQPGHEKPA), 303-313 (ELKDGGEDGKQ), and 322-338 (TWSEKSEHFGSRRERPS). The segment covering 343–356 (GGDGSRSGQIGSGG) has biased composition (gly residues). A coiled-coil region spans residues 373-402 (EQIAVVLMRLQEDMQNVLQRLHSLEVQTAS). Residues 430 to 450 (GTLALAVVWPFVVHWLMHVFL) traverse the membrane as a helical segment.

It belongs to the ATG37 family.

Its subcellular location is the peroxisome membrane. In terms of biological role, acyl-CoA binding protein which acts as the peroxisome receptor for pexophagy but is dispensable for aggrephagy and nonselective autophagy. Binds medium- and long-chain acyl-CoA esters. In Xenopus tropicalis (Western clawed frog), this protein is Acyl-CoA-binding domain-containing protein 5 (acbd5).